Consider the following 153-residue polypeptide: MSKHSLIENLKEQIEPIAEGLDYELYHIEFVKEGKENYLRIYIDSENGVSLEGCEKVSRAISELLDDIDPIQESYYLEVSSPGIDRVLYTDKHLEKYKSYNIVLNLYSPIDKKKKYEGELVDFNENEIDIKVEENIVTIPREKISKTTLKGEL.

Belongs to the RimP family.

Its subcellular location is the cytoplasm. In terms of biological role, required for maturation of 30S ribosomal subunits. The chain is Ribosome maturation factor RimP from Clostridium botulinum (strain ATCC 19397 / Type A).